The following is a 141-amino-acid chain: Small ribosomal subunit protein bS6 (141 aa).

The disordered stretch occupies residues 96–141 (VTGPSAMMKTVEREEFRKASQAGNQTTAPAASPADHAAAPASADRS). Residues 123–141 (APAASPADHAAAPASADRS) are compositionally biased toward low complexity.

Belongs to the bacterial ribosomal protein bS6 family.

Its function is as follows. Binds together with bS18 to 16S ribosomal RNA. This is Small ribosomal subunit protein bS6 from Verminephrobacter eiseniae (strain EF01-2).